Here is a 42-residue protein sequence, read N- to C-terminus: Photosystem I reaction center subunit IX (42 aa).

Residues 7–27 (YLSIAPVLATLWFGFLVGSLI) form a helical membrane-spanning segment.

The protein belongs to the PsaJ family.

It is found in the plastid membrane. May help in the organization of the PsaE and PsaF subunits. The protein is Photosystem I reaction center subunit IX of Aneura mirabilis (Parasitic liverwort).